Here is a 170-residue protein sequence, read N- to C-terminus: Peptide deformylase (170 aa).

Cys-91 and His-133 together coordinate Fe cation. Glu-134 is an active-site residue. Fe cation is bound at residue His-137.

Belongs to the polypeptide deformylase family. The cofactor is Fe(2+).

It catalyses the reaction N-terminal N-formyl-L-methionyl-[peptide] + H2O = N-terminal L-methionyl-[peptide] + formate. In terms of biological role, removes the formyl group from the N-terminal Met of newly synthesized proteins. Requires at least a dipeptide for an efficient rate of reaction. N-terminal L-methionine is a prerequisite for activity but the enzyme has broad specificity at other positions. The protein is Peptide deformylase of Pasteurella multocida (strain Pm70).